Reading from the N-terminus, the 117-residue chain is Protein SMALL AUXIN UP-REGULATED RNA 54 (117 aa).

This sequence belongs to the ARG7 family. Expressed in trichomes. Hardly observed in leaves.

The protein resides in the cell membrane. Provide a mechanistic link between auxin and plasma membrane H(+)-ATPases (PM H(+)-ATPases, e.g. AHA1 and AHA2), and triggers PM H(+)-ATPases activity by promoting phosphorylation of their C-terminal autoinhibitory domain as a result of PP2C-D subfamily of type 2C phosphatases inhibition, thus leading to the acidification of the apoplast and the facilitation of solutes and water uptake to drive cell expansion. Triggers plant growth probably by promoting cell elongation. Regulates branch angles and bending. The sequence is that of Protein SMALL AUXIN UP-REGULATED RNA 54 from Arabidopsis thaliana (Mouse-ear cress).